The sequence spans 354 residues: Chorismate synthase (354 aa).

An NADP(+)-binding site is contributed by arginine 48. FMN contacts are provided by residues 125-127 (RSS), 239-240 (NA), glycine 280, 295-299 (KPVAT), and arginine 321.

It belongs to the chorismate synthase family. In terms of assembly, homotetramer. FMNH2 serves as cofactor.

The catalysed reaction is 5-O-(1-carboxyvinyl)-3-phosphoshikimate = chorismate + phosphate. Its pathway is metabolic intermediate biosynthesis; chorismate biosynthesis; chorismate from D-erythrose 4-phosphate and phosphoenolpyruvate: step 7/7. Functionally, catalyzes the anti-1,4-elimination of the C-3 phosphate and the C-6 proR hydrogen from 5-enolpyruvylshikimate-3-phosphate (EPSP) to yield chorismate, which is the branch point compound that serves as the starting substrate for the three terminal pathways of aromatic amino acid biosynthesis. This reaction introduces a second double bond into the aromatic ring system. In Christiangramia forsetii (strain DSM 17595 / CGMCC 1.15422 / KT0803) (Gramella forsetii), this protein is Chorismate synthase.